A 286-amino-acid polypeptide reads, in one-letter code: uncharacterized protein (286 aa).

The AB hydrolase-1 domain maps to 26–268; the sequence is PLIILCHGFC…DACHYDIYEG (243 aa).

To E.coli YcjY.

This is an uncharacterized protein from Escherichia coli.